The chain runs to 121 residues: Trypsin/alpha-amylase inhibitor CMX2 (121 aa).

The N-terminal stretch at 1–24 (MAFKHQLILSTAILLAVLAAASAS) is a signal peptide.

It belongs to the protease inhibitor I6 (cereal trypsin/alpha-amylase inhibitor) family.

Its subcellular location is the secreted. This is Trypsin/alpha-amylase inhibitor CMX2 from Triticum aestivum (Wheat).